A 356-amino-acid polypeptide reads, in one-letter code: Glycerophosphodiester phosphodiesterase (356 aa).

A signal peptide spans 1–20 (MRGTYCVTLWGGVFAALVAG). A lipid anchor (N-palmitoyl cysteine) is attached at cysteine 21. Cysteine 21 carries the S-diacylglycerol cysteine lipid modification. A GP-PDE domain is found at 25–314 (RMIVAYRGAA…CHVHTVRKET (290 aa)).

Belongs to the glycerophosphoryl diester phosphodiesterase family. Palmitoylated upon expression of a fusion protein with first 40 residues fused to PhoA in E.coli.

The protein localises to the cell inner membrane. The enzyme catalyses a sn-glycero-3-phosphodiester + H2O = an alcohol + sn-glycerol 3-phosphate + H(+). Its function is as follows. Glycerophosphoryl diester phosphodiesterase hydrolyzes deacylated phospholipids to G3P and the corresponding alcohols. In terms of biological role, binds human IgA, IgD and the Fc portion of IgG but not IgM, which may contribute to evasion of the human immune system. The protein is Glycerophosphodiester phosphodiesterase (glpQ) of Treponema pallidum (strain Nichols).